The sequence spans 623 residues: Prothrombin (623 aa).

Residues 1 to 24 (MAHVRGLQLPGCLALAALCTLVHS) form the signal peptide. Positions 25 to 43 (QHVFLAPQQALSLLQRVRR) are excised as a propeptide. The Gla domain maps to 44–90 (ANSVFLEEVRKGNLERECVEETCSYEEAFEALESSTATDVFWAKYTA). 4-carboxyglutamate is present on residues Glu-50, Glu-51, Glu-58, Glu-60, Glu-63, Glu-64, Glu-69, Glu-70, Glu-73, and Glu-76. Residues Cys-61 and Cys-66 are joined by a disulfide bond. Disulfide bonds link Cys-91/Cys-104, Cys-109/Cys-187, Cys-130/Cys-170, Cys-158/Cys-182, Cys-214/Cys-292, Cys-235/Cys-275, Cys-263/Cys-287, Cys-337/Cys-483, Cys-392/Cys-408, Cys-537/Cys-551, and Cys-565/Cys-595. Kringle domains are found at residues 108-187 (NCAE…IPVC) and 213-292 (QCVP…LNYC). Asn-122 and Asn-144 each carry an N-linked (GlcNAc...) asparagine glycan. The region spanning 365–619 (IVEGSDAEIG…LKKWIQKVID (255 aa)) is the Peptidase S1 domain. His-407 serves as the catalytic Charge relay system. An N-linked (GlcNAc...) asparagine glycan is attached at Asn-417. The active-site Charge relay system is Asp-463. A high affinity receptor-binding region which also known as the TP508 peptide region spans residues 552–574 (AGYKPDEGKRGDACEGDSGGPFV). Ser-569 serves as the catalytic Charge relay system.

The protein belongs to the peptidase S1 family. In terms of assembly, heterodimer (named alpha-thrombin) of a light and a heavy chain; disulfide-linked. Forms a heterodimer with SERPINA5. In plasma, interacts (via N-terminus) with alpha-1-microglobulin; this interaction does not prevent the activation of prothrombin to thrombin. Post-translationally, the gamma-carboxyglutamyl residues, which bind calcium ions, result from the carboxylation of glutamyl residues by a microsomal enzyme, the vitamin K-dependent carboxylase. The modified residues are necessary for the calcium-dependent interaction with a negatively charged phospholipid surface, which is essential for the conversion of prothrombin to thrombin. In terms of processing, in the penultimate step of the coagulation cascade, prothrombin is converted to thrombin by the prothrombinase complex composed of factor Xa (F10), cofactor Va (F5), and phospholipids. This activation requires factor Xa-catalyzed sequential cleavage at 2 sites, Arg-315 and Arg-364, along 2 possible pathways. In the first pathway, the first cleavage occurs at Arg-315, leading to the formation of the inactive intermediate prethrombin-2. This pathway preferentially occurs on platelets and in the absence of cofactor Va. In the second pathway, the first cleavage occurs at Arg-364, which separates protease domain into 2 chains that remain connected through a disulfide bond and generates the active intermediate meizothrombin. The presence of cofactor Va directs activation along the meizothrombin pathway and greatly accelerates the rate of cleavage at Arg-364, but has a smaller effect on the cleavage of meizothrombin at Arg-315. Meizothrombin accumulates as an intermediate when prothrombinase is assembled on the membrane of red blood cells.

It catalyses the reaction Selective cleavage of Arg-|-Gly bonds in fibrinogen to form fibrin and release fibrinopeptides A and B.. Activity is promoted in the presence of negatively charged surfaces, such as polyphosphate and dextran sulfate. Inhibited by SERPINA5. Its function is as follows. Thrombin, which cleaves bonds after Arg and Lys, converts fibrinogen to fibrin and activates factors V, VII, VIII, XIII, and, in complex with thrombomodulin, protein C. Functions in blood homeostasis, inflammation and wound healing. Activates coagulation factor XI (F11); activation is promoted by the contact with negatively charged surfaces. Triggers the production of pro-inflammatory cytokines, such as MCP-1/CCL2 and IL8/CXCL8, in endothelial cells. This is Prothrombin (F2) from Pongo abelii (Sumatran orangutan).